Reading from the N-terminus, the 30-residue chain is Cliotide T20 (30 aa).

The segment at residues 1–30 is a cross-link (cyclopeptide (Gly-Asn)); it reads GSAIRCGESCLLGKCYTPGCTCDRPICKKN. Cystine bridges form between cysteine 6–cysteine 20, cysteine 10–cysteine 22, and cysteine 15–cysteine 27.

Contains 3 disulfide bonds. Post-translationally, this is a cyclic peptide. Expressed in root nodules but not in seed.

Probably participates in a plant defense mechanism. Active against Gram-negative bacterium E.coli ATCC 700926 (MIC=0.5 uM) under low-salt conditions. Not active against Gram-positive bacterium S.aureus ATCC 12600 up to a concentration of 100 uM under low-salt conditions. Exhibits immunomodulatory activity but no cytotoxicity in vitro. The polypeptide is Cliotide T20 (Clitoria ternatea (Butterfly pea)).